A 213-amino-acid chain; its full sequence is Guanylate kinase (213 aa).

Positions 6–186 (GLLIILSSPS…TEERLKTIVS (181 aa)) constitute a Guanylate kinase-like domain. 13 to 20 (SPSGAGKS) contributes to the ATP binding site.

The protein belongs to the guanylate kinase family.

Its subcellular location is the cytoplasm. The catalysed reaction is GMP + ATP = GDP + ADP. Functionally, essential for recycling GMP and indirectly, cGMP. The chain is Guanylate kinase from Ruegeria pomeroyi (strain ATCC 700808 / DSM 15171 / DSS-3) (Silicibacter pomeroyi).